A 468-amino-acid polypeptide reads, in one-letter code: 6-phospho-beta-galactosidase (468 aa).

Residues Gln19, His116, Asn159, Glu160, and Asn297 each contribute to the D-galactose 6-phosphate site. Residue Glu160 is the Proton donor of the active site. Glu375 functions as the Nucleophile in the catalytic mechanism. 4 residues coordinate D-galactose 6-phosphate: Ser428, Trp429, Lys435, and Tyr437.

It belongs to the glycosyl hydrolase 1 family.

It carries out the reaction a 6-phospho-beta-D-galactoside + H2O = D-galactose 6-phosphate + an alcohol. The protein operates within carbohydrate metabolism; lactose degradation; D-galactose 6-phosphate and beta-D-glucose from lactose 6-phosphate: step 1/1. The chain is 6-phospho-beta-galactosidase from Streptococcus sanguinis (strain SK36).